The primary structure comprises 512 residues: GMP synthase [glutamine-hydrolyzing] (512 aa).

One can recognise a Glutamine amidotransferase type-1 domain in the interval 7-197; the sequence is TIIVLDFGSQ…VFGVCGCSEG (191 aa). Catalysis depends on cysteine 84, which acts as the Nucleophile. Active-site residues include histidine 171 and glutamate 173. The GMPS ATP-PPase domain maps to 198 to 387; sequence WNMENFIEVE…LGIPDEIVWR (190 aa). 225–231 contributes to the ATP binding site; sequence SGGVDSS.

Homodimer.

The catalysed reaction is XMP + L-glutamine + ATP + H2O = GMP + L-glutamate + AMP + diphosphate + 2 H(+). It participates in purine metabolism; GMP biosynthesis; GMP from XMP (L-Gln route): step 1/1. Catalyzes the synthesis of GMP from XMP. In Bacillus anthracis, this protein is GMP synthase [glutamine-hydrolyzing].